A 193-amino-acid polypeptide reads, in one-letter code: Molybdopterin synthase catalytic subunit (193 aa).

Substrate contacts are provided by residues 118–119, Lys-134, and 141–143; these read HR and KKE. The segment at 159–193 is disordered; sequence DRTTTDGTTASSPAPATRPAKGGGCCGSKVRANES. The segment covering 163–178 has biased composition (low complexity); the sequence is TDGTTASSPAPATRPA.

Belongs to the MoaE family. MOCS2B subfamily. Heterotetramer; composed of 2 small (MOCS2A) and 2 large (MOCS2B) subunits.

The protein localises to the cytoplasm. The catalysed reaction is 2 [molybdopterin-synthase sulfur-carrier protein]-C-terminal-Gly-aminoethanethioate + cyclic pyranopterin phosphate + H2O = molybdopterin + 2 [molybdopterin-synthase sulfur-carrier protein]-C-terminal Gly-Gly + 2 H(+). It participates in cofactor biosynthesis; molybdopterin biosynthesis. Catalytic subunit of the molybdopterin synthase complex, a complex that catalyzes the conversion of precursor Z into molybdopterin. Acts by mediating the incorporation of 2 sulfur atoms from thiocarboxylated MOCS2A into precursor Z to generate a dithiolene group. The chain is Molybdopterin synthase catalytic subunit from Oryza sativa subsp. indica (Rice).